A 40-amino-acid chain; its full sequence is Photosystem II reaction center protein J (40 aa).

Residues 8 to 28 form a helical membrane-spanning segment; the sequence is IPLWLISTVTGTLVIGLMGIF.

This sequence belongs to the PsbJ family. In terms of assembly, PSII is composed of 1 copy each of membrane proteins PsbA, PsbB, PsbC, PsbD, PsbE, PsbF, PsbH, PsbI, PsbJ, PsbK, PsbL, PsbM, PsbT, PsbX, PsbY, PsbZ, Psb30/Ycf12, at least 3 peripheral proteins of the oxygen-evolving complex and a large number of cofactors. It forms dimeric complexes.

The protein resides in the plastid. Its subcellular location is the chloroplast thylakoid membrane. Functionally, one of the components of the core complex of photosystem II (PSII). PSII is a light-driven water:plastoquinone oxidoreductase that uses light energy to abstract electrons from H(2)O, generating O(2) and a proton gradient subsequently used for ATP formation. It consists of a core antenna complex that captures photons, and an electron transfer chain that converts photonic excitation into a charge separation. The protein is Photosystem II reaction center protein J of Ginkgo biloba (Ginkgo).